A 230-amino-acid polypeptide reads, in one-letter code: Nicotinamide riboside kinase (230 aa).

Residue 12-20 coordinates ATP; the sequence is GASCSGKST. Residues serine 19 and aspartate 38 each coordinate Mg(2+). The active-site Proton acceptor is aspartate 38. Substrate is bound by residues 38 to 41 and 56 to 57; these read DDFY and WD. Arginine 153 contacts ATP. Substrate is bound by residues arginine 154 and 159–160; that span reads GY. ATP is bound by residues 157 to 159 and 203 to 205; these read RTG and RIQ.

This sequence belongs to the uridine kinase family. NRK subfamily.

The catalysed reaction is beta-nicotinamide D-riboside + ATP = beta-nicotinamide D-ribonucleotide + ADP + H(+). The enzyme catalyses beta-D-ribosylnicotinate + ATP = nicotinate beta-D-ribonucleotide + ADP + H(+). It participates in cofactor biosynthesis; NAD(+) biosynthesis. In terms of biological role, catalyzes the phosphorylation of nicotinamide riboside (NR) and nicotinic acid riboside (NaR) to form nicotinamide mononucleotide (NMN) and nicotinic acid mononucleotide (NaMN). The chain is Nicotinamide riboside kinase (nrk1) from Schizosaccharomyces pombe (strain 972 / ATCC 24843) (Fission yeast).